The chain runs to 65 residues: Photosystem II reaction center protein J (65 aa).

A compositionally biased stretch (basic and acidic residues) spans 1–17; it reads MSTKLKGPDGRIPDRLP. A disordered region spans residues 1–21; it reads MSTKLKGPDGRIPDRLPDGSP. Residues 36–56 traverse the membrane as a helical segment; it reads LWLVATVGGMAVLSVLGLFFF.

The protein belongs to the PsbJ family. In terms of assembly, PSII is composed of 1 copy each of membrane proteins PsbA, PsbB, PsbC, PsbD, PsbE, PsbF, PsbH, PsbI, PsbJ, PsbK, PsbL, PsbM, PsbT, PsbX, PsbY, Psb30/Ycf12, peripheral proteins PsbO, CyanoQ (PsbQ), PsbU, PsbV and a large number of cofactors. It forms dimeric complexes.

The protein resides in the cellular thylakoid membrane. Its function is as follows. One of the components of the core complex of photosystem II (PSII). PSII is a light-driven water:plastoquinone oxidoreductase that uses light energy to abstract electrons from H(2)O, generating O(2) and a proton gradient subsequently used for ATP formation. It consists of a core antenna complex that captures photons, and an electron transfer chain that converts photonic excitation into a charge separation. In Prochlorococcus marinus (strain MIT 9313), this protein is Photosystem II reaction center protein J.